The following is a 104-amino-acid chain: Large ribosomal subunit protein bL21 (104 aa).

The protein belongs to the bacterial ribosomal protein bL21 family. As to quaternary structure, part of the 50S ribosomal subunit. Contacts protein L20.

In terms of biological role, this protein binds to 23S rRNA in the presence of protein L20. The chain is Large ribosomal subunit protein bL21 from Agrobacterium fabrum (strain C58 / ATCC 33970) (Agrobacterium tumefaciens (strain C58)).